Consider the following 1025-residue polypeptide: Multidrug resistance protein MdtC (1025 aa).

12 helical membrane-spanning segments follow: residues phenylalanine 3–leucine 23, glutamate 333–leucine 353, isoleucine 360–cysteine 380, leucine 387–leucine 407, valine 431–leucine 451, phenylalanine 463–proline 483, leucine 528–proline 548, valine 853–serine 873, valine 875–leucine 895, leucine 897–valine 917, proline 953–glycine 973, and isoleucine 984–valine 1004.

The protein belongs to the resistance-nodulation-cell division (RND) (TC 2.A.6) family. MdtC subfamily. As to quaternary structure, part of a tripartite efflux system composed of MdtA, MdtB and MdtC. MdtC forms a heteromultimer with MdtB.

It is found in the cell inner membrane. Its function is as follows. The MdtABC tripartite complex confers resistance against novobiocin and deoxycholate. The sequence is that of Multidrug resistance protein MdtC from Escherichia coli (strain 55989 / EAEC).